The primary structure comprises 296 residues: ATP phosphoribosyltransferase (296 aa).

The protein belongs to the ATP phosphoribosyltransferase family. Long subfamily. It depends on Mg(2+) as a cofactor.

It localises to the cytoplasm. The catalysed reaction is 1-(5-phospho-beta-D-ribosyl)-ATP + diphosphate = 5-phospho-alpha-D-ribose 1-diphosphate + ATP. It functions in the pathway amino-acid biosynthesis; L-histidine biosynthesis; L-histidine from 5-phospho-alpha-D-ribose 1-diphosphate: step 1/9. With respect to regulation, feedback inhibited by histidine. Catalyzes the condensation of ATP and 5-phosphoribose 1-diphosphate to form N'-(5'-phosphoribosyl)-ATP (PR-ATP). Has a crucial role in the pathway because the rate of histidine biosynthesis seems to be controlled primarily by regulation of HisG enzymatic activity. The sequence is that of ATP phosphoribosyltransferase from Halorubrum lacusprofundi (strain ATCC 49239 / DSM 5036 / JCM 8891 / ACAM 34).